A 266-amino-acid chain; its full sequence is Orcokinin peptides type B (266 aa).

The N-terminal stretch at 1-20 (MTAQMFTIALLLSLSAIAAA) is a signal peptide. 3 consecutive propeptides follow at residues 21 to 46 (GTIKTAPARTPSTQDDASFPPDGAPV), 240 to 246 (DYDVFPD), and 264 to 266 (NVE).

This sequence belongs to the orcokinin family.

The protein resides in the secreted. Functionally, myotropic peptides that enhance both the frequency and amplitude of spontaneous hindgut contractions. The polypeptide is Orcokinin peptides type B (Procambarus clarkii (Red swamp crayfish)).